A 563-amino-acid chain; its full sequence is Arginine--tRNA ligase (563 aa).

A 'HIGH' region motif is present at residues 121 to 131 (PNIAKPFSIGH).

Belongs to the class-I aminoacyl-tRNA synthetase family. As to quaternary structure, monomer.

It localises to the cytoplasm. It carries out the reaction tRNA(Arg) + L-arginine + ATP = L-arginyl-tRNA(Arg) + AMP + diphosphate. The sequence is that of Arginine--tRNA ligase from Streptococcus agalactiae serotype III (strain NEM316).